We begin with the raw amino-acid sequence, 395 residues long: Xylose isomerase (395 aa).

Residues His-54 and Asp-57 contribute to the active site. Residues Glu-181, Glu-217, His-220, Asp-245, Asp-255, Asp-257, and Asp-293 each coordinate Mg(2+).

The protein belongs to the xylose isomerase family. In terms of assembly, homotetramer. Mg(2+) serves as cofactor.

Its subcellular location is the cytoplasm. It carries out the reaction alpha-D-xylose = alpha-D-xylulofuranose. This Arthrobacter sp. (strain FB24) protein is Xylose isomerase.